Reading from the N-terminus, the 126-residue chain is MARIAGVDLPRDKRVEIGLTYIYGIGLSRAQEIIAATGVNPDTRVKDLSDADVTALRGEIESNYQVEGDLRRLESLNIKRLVDIGTYRGRRHRMGLPVRGQRTRTNARTRRGRRQTVAGKKKAPGK.

Residues 92–126 (HRMGLPVRGQRTRTNARTRRGRRQTVAGKKKAPGK) form a disordered region. Residues 101 to 126 (QRTRTNARTRRGRRQTVAGKKKAPGK) show a composition bias toward basic residues.

It belongs to the universal ribosomal protein uS13 family. As to quaternary structure, part of the 30S ribosomal subunit. Forms a loose heterodimer with protein S19. Forms two bridges to the 50S subunit in the 70S ribosome.

Located at the top of the head of the 30S subunit, it contacts several helices of the 16S rRNA. In the 70S ribosome it contacts the 23S rRNA (bridge B1a) and protein L5 of the 50S subunit (bridge B1b), connecting the 2 subunits; these bridges are implicated in subunit movement. Contacts the tRNAs in the A and P-sites. In Nostoc punctiforme (strain ATCC 29133 / PCC 73102), this protein is Small ribosomal subunit protein uS13.